The following is a 614-amino-acid chain: Ankyrin repeat domain-containing protein 55 (614 aa).

The tract at residues 1–20 (MMRQATMDFSTPSVFDQQRG) is disordered. Polar residues predominate over residues 7–16 (MDFSTPSVFD). ANK repeat units follow at residues 26-55 (VDLT…SILE), 60-89 (EGCT…NINM), 93-125 (YGRT…IPDK), 126-157 (NGRL…EINH), 161-190 (EGMT…DPTL), 194-223 (DFKT…GPSI), 230-260 (SGKT…NLQA), 264-293 (DDRT…DSNL), and 297-326 (NEST…TEPT). 4 disordered regions span residues 319–339 (QESR…PQKK), 354–375 (KKEE…EEDT), 454–476 (TSHA…SRSE), and 564–614 (RNNL…SDEN). Positions 354 to 373 (KKEEQRAHQKDPSRDRYREE) are enriched in basic and acidic residues. Ser-475 is modified (phosphoserine).

In Homo sapiens (Human), this protein is Ankyrin repeat domain-containing protein 55 (ANKRD55).